The primary structure comprises 707 residues: E3 ubiquitin-protein ligase Praja-2 (707 aa).

The span at 1–10 (MSQYTEKEPS) shows a compositional bias: basic and acidic residues. 3 disordered regions span residues 1 to 32 (MSQY…QTIT), 72 to 120 (PKEN…PSIA), and 250 to 314 (QNGQ…VRPK). At Ser-2 the chain carries N-acetylserine. Polar residues-rich tracts occupy residues 74 to 83 (ENTSGSSSLD) and 109 to 119 (LNQSTESSPSI). The segment covering 257-276 (RSSEDGVVRKRRQDDTDQGR) has biased composition (basic and acidic residues). Positions 293-308 (EQNTSDRANHHGSSPE) are enriched in polar residues. Phosphoserine is present on residues Ser-306 and Ser-320. Phosphoserine; by PKA is present on Ser-339. Disordered regions lie at residues 379-405 (RVTQ…QESR) and 424-493 (EDSS…QTSL). Positions 381 to 390 (TQRETERNRV) are enriched in basic and acidic residues. Position 385 is a phosphothreonine; by PKA (Thr-385). Positions 391–401 (TSENGATASGR) are enriched in polar residues. Ser-430 carries the post-translational modification Phosphoserine. The span at 465-481 (NDPELQSDSSGPEEENQ) shows a compositional bias: acidic residues. Positions 482 to 491 (ELSLQEGEQT) are enriched in polar residues. An interaction with PRKAR1A, PRKAR2A and PRKAR2B region spans residues 530-707 (DGNNNLEDDS…PANDNAEEAP (178 aa)). The segment at 549–569 (WSLFDGFADGLGVAEAISYVD) is mediates interaction with TBC1D31. Residues 633 to 674 (CPICCSEYIKDDIATELPCHHFFHKPCVSIWLQKSGTCPVCR) form an RING-type; atypical zinc finger. A compositionally biased stretch (low complexity) spans 685-701 (SAAASSDPDPDASPAND). The interval 685-707 (SAAASSDPDPDASPANDNAEEAP) is disordered.

In terms of assembly, binds ubiquitin-conjugating enzymes (E2s). In vitro, interacts with the ubiquitin-conjugating enzyme, UBE2D2. The phosphorylated form interacts with PRKAR1A, PRKAR2A and PRKAR2B. Binds the catalytic subunits of cAMP-dependent protein kinase. Interacts with MFHAS1. Interacts with TBC1D31; the interaction is direct and recruits PJA2 to centrosomes.

The protein resides in the cytoplasm. It localises to the cell membrane. Its subcellular location is the endoplasmic reticulum membrane. The protein localises to the golgi apparatus membrane. It is found in the synapse. The protein resides in the postsynaptic density. It localises to the cytoskeleton. Its subcellular location is the microtubule organizing center. The protein localises to the centrosome. The catalysed reaction is S-ubiquitinyl-[E2 ubiquitin-conjugating enzyme]-L-cysteine + [acceptor protein]-L-lysine = [E2 ubiquitin-conjugating enzyme]-L-cysteine + N(6)-ubiquitinyl-[acceptor protein]-L-lysine.. Its pathway is protein modification; protein ubiquitination. Has E2-dependent E3 ubiquitin-protein ligase activity. Responsible for ubiquitination of cAMP-dependent protein kinase type I and type II-alpha/beta regulatory subunits and for targeting them for proteasomal degradation. Essential for PKA-mediated long-term memory processes. Through the ubiquitination of MFHAS1, positively regulates the TLR2 signaling pathway that leads to the activation of the downstream p38 and JNK MAP kinases and promotes the polarization of macrophages toward the pro-inflammatory M1 phenotype. Plays a role in ciliogenesis by ubiquitinating OFD1. This Mus musculus (Mouse) protein is E3 ubiquitin-protein ligase Praja-2 (Pja2).